Consider the following 1616-residue polypeptide: Replicase large subunit (1616 aa).

Residues 50–458 (FSKVISEEQT…QSLSMTFYLH (409 aa)) are methyltransferase. The Alphavirus-like MT domain occupies 72–281 (TFYNTQNAVH…HSYSNILKYV (210 aa)). The (+)RNA virus helicase ATP-binding domain occupies 801–963 (VVYSDMAKLR…KLEVDEVETR (163 aa)). Residues 830–1085 (LVDGVPGCGK…RHTCSLKYYT (256 aa)) form a helicase region. 833–840 (GVPGCGKT) contributes to the ATP binding site. Positions 964 to 1116 (RTTLRCPADV…DMYKVDAGTQ (153 aa)) constitute a (+)RNA virus helicase C-terminal domain. The RdRp catalytic domain maps to 1380-1493 (MDVLELDISK…YFPKGCEFPD (114 aa)).

The protein belongs to the ssRNA positive-strand viruses RNA-directed RNA polymerase family. In terms of assembly, heterodimer of a large and a small subunit.

The enzyme catalyses RNA(n) + a ribonucleoside 5'-triphosphate = RNA(n+1) + diphosphate. It carries out the reaction ATP + H2O = ADP + phosphate + H(+). In terms of biological role, is an RNA-dependent RNA polymerase active in viral RNA replication. Functionally, is a methyltransferase active in RNA capping and an RNA helicase. Methyltransferase displays a cytoplasmic capping enzyme activity. This function is necessary since all viral RNAs are synthesized in the cytoplasm, and host capping enzymes are restricted to the nucleus. Helicase region probably exhibits NTPase and RNA unwinding activities (Potential). It also acts as a suppressor of RNA-mediated gene silencing, also known as post-transcriptional gene silencing (PTGS), a mechanism of plant viral defense that limits the accumulation of viral RNAs. May mediate silencing suppression through either inhibition of HEN1-mediated siRNA or siRNA demethylation. This Nicotiana tabacum (Common tobacco) protein is Replicase large subunit.